Here is a 607-residue protein sequence, read N- to C-terminus: UvrABC system protein C (607 aa).

Residues 16 to 94 (GRPGVYRMFD…IKEWRPPYNI (79 aa)) enclose the GIY-YIG domain. In terms of domain architecture, UVR spans 203–238 (NALSDELNATMEKAAMALDFERAAELRDQVALLRRV).

This sequence belongs to the UvrC family. Interacts with UvrB in an incision complex.

It localises to the cytoplasm. Its function is as follows. The UvrABC repair system catalyzes the recognition and processing of DNA lesions. UvrC both incises the 5' and 3' sides of the lesion. The N-terminal half is responsible for the 3' incision and the C-terminal half is responsible for the 5' incision. The polypeptide is UvrABC system protein C (Pseudomonas savastanoi pv. phaseolicola (strain 1448A / Race 6) (Pseudomonas syringae pv. phaseolicola (strain 1448A / Race 6))).